Reading from the N-terminus, the 105-residue chain is Small ribosomal subunit protein uS10 (105 aa).

The protein belongs to the universal ribosomal protein uS10 family. As to quaternary structure, part of the 30S ribosomal subunit.

Its function is as follows. Involved in the binding of tRNA to the ribosomes. The protein is Small ribosomal subunit protein uS10 of Roseobacter denitrificans (strain ATCC 33942 / OCh 114) (Erythrobacter sp. (strain OCh 114)).